The primary structure comprises 481 residues: Glycogen synthase (481 aa).

K16 serves as a coordination point for ADP-alpha-D-glucose.

It belongs to the glycosyltransferase 1 family. Bacterial/plant glycogen synthase subfamily.

It carries out the reaction [(1-&gt;4)-alpha-D-glucosyl](n) + ADP-alpha-D-glucose = [(1-&gt;4)-alpha-D-glucosyl](n+1) + ADP + H(+). The protein operates within glycan biosynthesis; glycogen biosynthesis. Functionally, synthesizes alpha-1,4-glucan chains using ADP-glucose. This Cellvibrio japonicus (strain Ueda107) (Pseudomonas fluorescens subsp. cellulosa) protein is Glycogen synthase.